Reading from the N-terminus, the 549-residue chain is Glucose-6-phosphate isomerase (549 aa).

The Proton donor role is filled by Glu353. Residues His384 and Lys510 contribute to the active site. Positions 523–549 (AEPPAAQSDSSTDALVRRYRSERGRTA) are disordered. The segment covering 537–549 (LVRRYRSERGRTA) has biased composition (basic and acidic residues).

Belongs to the GPI family.

The protein resides in the cytoplasm. It carries out the reaction alpha-D-glucose 6-phosphate = beta-D-fructose 6-phosphate. It participates in carbohydrate biosynthesis; gluconeogenesis. Its pathway is carbohydrate degradation; glycolysis; D-glyceraldehyde 3-phosphate and glycerone phosphate from D-glucose: step 2/4. In terms of biological role, catalyzes the reversible isomerization of glucose-6-phosphate to fructose-6-phosphate. This Mycolicibacterium gilvum (strain PYR-GCK) (Mycobacterium gilvum (strain PYR-GCK)) protein is Glucose-6-phosphate isomerase.